Consider the following 313-residue polypeptide: Protein phosphatase PTC7 homolog fig (313 aa).

In terms of domain architecture, PPM-type phosphatase spans K47–L307. The Mn(2+) site is built by D83, G84, and D229.

Belongs to the PP2C family. Requires Mg(2+) as cofactor. Mn(2+) serves as cofactor.

It catalyses the reaction O-phospho-L-seryl-[protein] + H2O = L-seryl-[protein] + phosphate. The enzyme catalyses O-phospho-L-threonyl-[protein] + H2O = L-threonyl-[protein] + phosphate. In Drosophila virilis (Fruit fly), this protein is Protein phosphatase PTC7 homolog fig.